The following is a 461-amino-acid chain: Cysteine--tRNA ligase (461 aa).

C30 contacts Zn(2+). A 'HIGH' region motif is present at residues 32–42 (VTVYDLCHIGH). 3 residues coordinate Zn(2+): C211, H236, and E240. The 'KMSKS' region signature appears at 268-272 (KMSKS). K271 provides a ligand contact to ATP.

This sequence belongs to the class-I aminoacyl-tRNA synthetase family. Monomer. Zn(2+) serves as cofactor.

It localises to the cytoplasm. The catalysed reaction is tRNA(Cys) + L-cysteine + ATP = L-cysteinyl-tRNA(Cys) + AMP + diphosphate. This chain is Cysteine--tRNA ligase, found in Shewanella sp. (strain ANA-3).